Reading from the N-terminus, the 897-residue chain is Schlafen family member 13 (897 aa).

The interval 2–355 (EANHCSLGVY…WVEKMMDADP (354 aa)) is n'-domain region. Active-site residues include Glu208 and Glu213. Zn(2+)-binding residues include His284, Cys286, and Cys321. Residue 599-606 (GLPGSGKT) participates in ATP binding.

The protein belongs to the Schlafen family. Subgroup III subfamily. The cofactor is Mg(2+).

It is found in the cytoplasm. Its function is as follows. Endoribonuclease that cleaves tRNAs and rRNAs. Cleaves tRNAs 11 nucleotides from the 3'-terminus at the acceptor stem. Does not act on tRNA(Sec). Able to restrict HIV-1 virus replication; ability to inhibit HIV-1 replication is dependent on endoribonuclease activity. The protein is Schlafen family member 13 of Homo sapiens (Human).